Here is a 300-residue protein sequence, read N- to C-terminus: MPSSFVSQLSPSLFSILREQLEKKGFTISIPPHTVFQGRSPTVSCTVYQSGKIVVQGKGTQEFVEFFLEPEILQTFSSQNVQQDLRSRIGVDESGKGDFFGPLCTAGVYASSPQAIEALYKTSICDSKLIPDAKILSLAQNIRSLCACKVITLFPEKYNALYANFQNLNSLLAWTHATIIDNLAPHPAGAVFAISDQFASSERVLLQAVRKKCSDIELIQRHRAEQDVVVAAASILAREAFLSSIHALESQYQIRLLKGASGKVKQRAKEILHNKGQVVLEKVCKTHFKTFNEVLGSGNQ.

Positions 86 to 300 (RSRIGVDESG…FNEVLGSGNQ (215 aa)) constitute an RNase H type-2 domain. Residues Asp92, Glu93, and Asp196 each coordinate a divalent metal cation.

Belongs to the RNase HII family. RnhC subfamily. The cofactor is Mn(2+). Mg(2+) serves as cofactor.

It is found in the cytoplasm. It carries out the reaction Endonucleolytic cleavage to 5'-phosphomonoester.. Endonuclease that specifically degrades the RNA of RNA-DNA hybrids. This is Ribonuclease HIII from Chlamydia trachomatis serovar A (strain ATCC VR-571B / DSM 19440 / HAR-13).